Consider the following 240-residue polypeptide: Pyridoxine 5'-phosphate synthase (240 aa).

Asn-6 provides a ligand contact to 3-amino-2-oxopropyl phosphate. 8–9 contacts 1-deoxy-D-xylulose 5-phosphate; the sequence is DH. Residue Arg-17 coordinates 3-amino-2-oxopropyl phosphate. His-42 acts as the Proton acceptor in catalysis. Positions 44 and 49 each coordinate 1-deoxy-D-xylulose 5-phosphate. Glu-69 functions as the Proton acceptor in the catalytic mechanism. Thr-99 lines the 1-deoxy-D-xylulose 5-phosphate pocket. The active-site Proton donor is the His-190. 3-amino-2-oxopropyl phosphate contacts are provided by residues Gly-191 and 212–213; that span reads GH.

Belongs to the PNP synthase family. Homooctamer; tetramer of dimers.

The protein localises to the cytoplasm. It carries out the reaction 3-amino-2-oxopropyl phosphate + 1-deoxy-D-xylulose 5-phosphate = pyridoxine 5'-phosphate + phosphate + 2 H2O + H(+). It functions in the pathway cofactor biosynthesis; pyridoxine 5'-phosphate biosynthesis; pyridoxine 5'-phosphate from D-erythrose 4-phosphate: step 5/5. Functionally, catalyzes the complicated ring closure reaction between the two acyclic compounds 1-deoxy-D-xylulose-5-phosphate (DXP) and 3-amino-2-oxopropyl phosphate (1-amino-acetone-3-phosphate or AAP) to form pyridoxine 5'-phosphate (PNP) and inorganic phosphate. This Pseudomonas putida (strain ATCC 700007 / DSM 6899 / JCM 31910 / BCRC 17059 / LMG 24140 / F1) protein is Pyridoxine 5'-phosphate synthase.